The sequence spans 722 residues: Lysophospholipid acyltransferase 6 (722 aa).

5 helical membrane-spanning segments follow: residues 25–45 (MVGLSVDLVNFLICQISALFL), 62–84 (LRHTFALSIGLAFGYFCFGQQAI), 104–123 (IVQRAVLLVAMSYLLCVHLM), 180–200 (ALEYFSYVWHFQSILAGPLVF), and 243–263 (KVVGSLVCAFIFMKFVKIYPV). Residues Asn-349 and His-381 contribute to the active site. The next 3 helical transmembrane spans lie at 378-398 (AVWHGFYPGYYLTFATGAVVV), 424-444 (ILTCLITRVVLGYATFPFVLL), and 452-472 (LYLRFYLCLHIISLVTIFILP). Composition is skewed to polar residues over residues 485-511 (NGNGNVRLSGSGNTKDAVTTSVESTAA) and 549-570 (VEQPTEQPNNVNLRSRPQQQQP). 2 disordered regions span residues 485 to 582 (NGNG…PTCA) and 650 to 687 (NGAISLDSSNGGGLRKRNISSVHDNGTDPGHATADLHP).

This sequence belongs to the membrane-bound acyltransferase family.

Its subcellular location is the endoplasmic reticulum. It is found in the membrane. It carries out the reaction a 1-acyl-sn-glycero-3-phospho-L-serine + an acyl-CoA = a 1,2-diacyl-sn-glycero-3-phospho-L-serine + CoA. It catalyses the reaction 1-(9Z-octadecenoyl)-sn-glycero-3-phospho-L-serine + (9Z)-hexadecenoyl-CoA = 1-(9Z-octadecenoyl)-2-(9Z-hexadecenoyl)-sn-glycero-3-phospho-L-serine + CoA. The enzyme catalyses 1-(9Z-octadecenoyl)-sn-glycero-3-phospho-L-serine + (9Z)-octadecenoyl-CoA = 1,2-di-(9Z)-octadecenoyl-sn-glycero-3-phospho-L-serine + CoA. The catalysed reaction is a 1-acyl-sn-glycero-3-phosphocholine + an acyl-CoA = a 1,2-diacyl-sn-glycero-3-phosphocholine + CoA. It carries out the reaction 1-hexadecanoyl-sn-glycero-3-phosphocholine + (9Z)-octadecenoyl-CoA = 1-hexadecanoyl-2-(9Z-octadecenoyl)-sn-glycero-3-phosphocholine + CoA. It catalyses the reaction (9Z)-hexadecenoyl-CoA + 1-hexadecanoyl-sn-glycero-3-phosphocholine = 1-hexadecanoyl-2-(9Z-hexadecenoyl)-sn-glycero-3-phosphocholine + CoA. The enzyme catalyses a 1-acyl-sn-glycero-3-phosphoethanolamine + an acyl-CoA = a 1,2-diacyl-sn-glycero-3-phosphoethanolamine + CoA. The catalysed reaction is 1-hexadecanoyl-sn-glycero-3-phosphoethanolamine + (9Z)-octadecenoyl-CoA = 1-hexadecanoyl-2-(9Z-octadecenoyl)-sn-glycero-3-phosphoethanolamine + CoA. It carries out the reaction 1-hexadecanoyl-sn-glycero-3-phosphoethanolamine + (9Z,12Z)-octadecadienoyl-CoA = 1-hexadecanoyl-2-(9Z,12Z-octadecadienoyl)-sn-glycero-3-phosphoethanolamine + CoA. It catalyses the reaction 1-hexadecanoyl-sn-glycero-3-phosphoethanolamine + (9Z)-hexadecenoyl-CoA = 1-hexadecanoyl-2-(9Z)-hexadecenoyl-sn-glycero-3-phosphoethanolamine + CoA. The enzyme catalyses 1-(9Z-octadecenoyl)-sn-glycero-3-phospho-(1'-sn-glycerol) + (9Z)-octadecenoyl-CoA = 1,2-di-(9Z-octadecenoyl)-sn-glycero-3-phospho-(1'-sn-glycerol) + CoA. It functions in the pathway lipid metabolism; phospholipid metabolism. Its function is as follows. Acyltransferase with broad-specificity, that mediates the acylation of lysophospholipids to produce phospholipids (glycerophospholipids). Converts lysophosphatidylserine (1-acyl-2-hydroxy-sn-glycero-3-phospho-L-serine or LPS) to phosphatidylserine (1,2-diacyl-sn-glycero-3-phospho-L-serine or PS) (LPSAT activity), lysophosphatidylcholine (1-acyl-sn-glycero-3-phosphocholine or LPC) to phosphatidylcholine (1,2-diacyl-sn-glycero-3-phosphocholine or PC) (LPCAT activity), also lysophosphatidylethanolamine (1-acyl-sn-glycero-3-phosphochethanolamine or LPE) to phosphatidylchethanolamine (LPEAT activity) and lysophosphatidylglycerol (1-acyl-2-hydroxy-sn-glycero-3-phospho-(1'-sn-glycerol) or LPG) to phosphatidylglycerol (1,2-diacyl-sn-glycero-3-phospho-(1'-sn-glycerol) or PG) (LPGAT activity). Has a preference for unsaturated fatty acids of at least 16 carbons such as oleoyl-CoA ((9Z)-octadecenoyl-CoA) and palmitoleoyl-CoA ((9Z)-hexadecenoyl-CoA). Glycerophospholipids are important structural and functional components of cellular membrane, acyl-chain remodeling regulates the molecular species distribution of glycerophospholipids which can affect membrane fluidity and curvature. Essential for fertility and viability together with Nessy protein (Nes). The protein is Lysophospholipid acyltransferase 6 of Drosophila melanogaster (Fruit fly).